A 343-amino-acid chain; its full sequence is Annexin A1 isoform p37 (343 aa).

Gln19 participates in a covalent cross-link: Isoglutamyl lysine isopeptide (Gln-Lys) (interchain with K-?). Tyr21 is subject to Phosphotyrosine; by EGFR; in vitro. Ser24 carries the phosphoserine; by PKC; in vitro modification. Annexin repeat units lie at residues 38–109 (FDPS…ALLK), 110–181 (TPAQ…VLAK), 193–265 (DLAD…ALVK), and 269–340 (SKPA…ALCG).

It belongs to the annexin family. In terms of processing, phosphorylated by protein kinase C and epidermal growth factor receptor/kinase. The N-terminus is blocked.

It localises to the nucleus. The protein localises to the cytoplasm. The protein resides in the cell projection. Its subcellular location is the cilium. It is found in the basolateral cell membrane. In terms of biological role, calcium/phospholipid-binding protein which promotes membrane fusion and is involved in exocytosis. This protein regulates phospholipase A2 activity. It seems to bind from two to four calcium ions with high affinity. In Columba livia (Rock dove), this protein is Annexin A1 isoform p37 (CP37).